Here is a 485-residue protein sequence, read N- to C-terminus: Aspartyl/glutamyl-tRNA(Asn/Gln) amidotransferase subunit B (485 aa).

The protein belongs to the GatB/GatE family. GatB subfamily. Heterotrimer of A, B and C subunits.

It carries out the reaction L-glutamyl-tRNA(Gln) + L-glutamine + ATP + H2O = L-glutaminyl-tRNA(Gln) + L-glutamate + ADP + phosphate + H(+). The enzyme catalyses L-aspartyl-tRNA(Asn) + L-glutamine + ATP + H2O = L-asparaginyl-tRNA(Asn) + L-glutamate + ADP + phosphate + 2 H(+). Its function is as follows. Allows the formation of correctly charged Asn-tRNA(Asn) or Gln-tRNA(Gln) through the transamidation of misacylated Asp-tRNA(Asn) or Glu-tRNA(Gln) in organisms which lack either or both of asparaginyl-tRNA or glutaminyl-tRNA synthetases. The reaction takes place in the presence of glutamine and ATP through an activated phospho-Asp-tRNA(Asn) or phospho-Glu-tRNA(Gln). The protein is Aspartyl/glutamyl-tRNA(Asn/Gln) amidotransferase subunit B of Borrelia garinii subsp. bavariensis (strain ATCC BAA-2496 / DSM 23469 / PBi) (Borreliella bavariensis).